Consider the following 105-residue polypeptide: Malonate decarboxylase acyl carrier protein (105 aa).

Serine 28 is modified (O-(phosphoribosyl dephospho-coenzyme A)serine).

The protein belongs to the MdcC family. Covalently binds the prosthetic group of malonate decarboxylase.

The protein localises to the cytoplasm. Its function is as follows. Subunit of malonate decarboxylase, it is an acyl carrier protein to which acetyl and malonyl thioester residues are bound via a 2'-(5''-phosphoribosyl)-3'-dephospho-CoA prosthetic group and turn over during the catalytic mechanism. This is Malonate decarboxylase acyl carrier protein from Bradyrhizobium diazoefficiens (strain JCM 10833 / BCRC 13528 / IAM 13628 / NBRC 14792 / USDA 110).